The following is a 126-amino-acid chain: Protein ApaG (126 aa).

The 125-residue stretch at 2–126 (SDPRYQVDVS…FRLAVPGALH (125 aa)) folds into the ApaG domain.

The polypeptide is Protein ApaG (Pseudomonas fluorescens (strain ATCC BAA-477 / NRRL B-23932 / Pf-5)).